We begin with the raw amino-acid sequence, 192 residues long: ATP-dependent Clp protease proteolytic subunit 1 (192 aa).

S92 serves as the catalytic Nucleophile. Residue H117 is part of the active site.

This sequence belongs to the peptidase S14 family. In terms of assembly, fourteen ClpP subunits assemble into 2 heptameric rings which stack back to back to give a disk-like structure with a central cavity, resembling the structure of eukaryotic proteasomes.

The protein localises to the cytoplasm. The catalysed reaction is Hydrolysis of proteins to small peptides in the presence of ATP and magnesium. alpha-casein is the usual test substrate. In the absence of ATP, only oligopeptides shorter than five residues are hydrolyzed (such as succinyl-Leu-Tyr-|-NHMec, and Leu-Tyr-Leu-|-Tyr-Trp, in which cleavage of the -Tyr-|-Leu- and -Tyr-|-Trp bonds also occurs).. Its function is as follows. Cleaves peptides in various proteins in a process that requires ATP hydrolysis. Has a chymotrypsin-like activity. Plays a major role in the degradation of misfolded proteins. The chain is ATP-dependent Clp protease proteolytic subunit 1 from Chlamydia muridarum (strain MoPn / Nigg).